Reading from the N-terminus, the 561-residue chain is Endoplasmic reticulum oxidoreductin-1 (561 aa).

The first 18 residues, 1–18, serve as a signal peptide directing secretion; it reads MVKVLQLCFLSAISLVQA. 2 N-linked (GlcNAc...) asparagine glycosylation sites follow: Asn20 and Asn39. 5 disulfide bridges follow: Cys95–Cys349, Cys105–Cys110, Cys145–Cys166, Cys152–Cys295, and Cys352–Cys355. N-linked (GlcNAc...) asparagine glycosylation occurs at Asn135. FAD-binding residues include Arg187, Thr189, Trp200, Ser228, His231, and Arg260. N-linked (GlcNAc...) asparagine glycosylation is present at Asn342. Cys352 functions as the Nucleophile in the catalytic mechanism. Cys355 is an active-site residue. Residue Asn452 is glycosylated (N-linked (GlcNAc...) asparagine).

This sequence belongs to the EROs family. May function both as a monomer and a homodimer. FAD serves as cofactor.

The protein localises to the endoplasmic reticulum membrane. Its function is as follows. Essential oxidoreductase that oxidizes proteins in the endoplasmic reticulum to produce disulfide bonds. Acts by oxidizing directly PDI1 isomerase through a direct disulfide exchange. Does not act as a direct oxidant of folding substrate, but relies on PDI1 to transfer oxidizing equivalent. Does not oxidize all pdi related proteins, suggesting that it can discriminate between PDI1 and related proteins. Its reoxidation probably involves electron transfer to molecular oxygen via FAD. Acts independently of glutathione. May be responsible for a significant proportion of reactive oxygen species (ROS) in the cell, thereby being a source of oxidative stress. The protein is Endoplasmic reticulum oxidoreductin-1 (ERO1) of Kluyveromyces lactis (strain ATCC 8585 / CBS 2359 / DSM 70799 / NBRC 1267 / NRRL Y-1140 / WM37) (Yeast).